The chain runs to 1713 residues: Serine/threonine-protein kinase MRCK beta (1713 aa).

In terms of domain architecture, Protein kinase spans phenylalanine 76–phenylalanine 342. Residues isoleucine 82 to valine 90 and lysine 105 each bind ATP. The active-site Proton acceptor is aspartate 200. Serine 221 and serine 233 each carry phosphoserine; by autocatalysis. At threonine 239 the chain carries Phosphothreonine; by autocatalysis. Residues glutamate 343–glycine 413 enclose the AGC-kinase C-terminal domain. Threonine 423 is modified (phosphothreonine). Positions leucine 434–histidine 649 form a coiled coil. An Omega-N-methylarginine modification is found at arginine 671. Coiled-coil stretches lie at residues glutamine 681–glutamate 815 and glutamate 878–aspartate 939. Serine 927 carries the phosphoserine modification. Position 954 is a phosphotyrosine (tyrosine 954). A compositionally biased stretch (polar residues) spans alanine 971–glutamate 994. Residues alanine 971–proline 1022 form a disordered region. The segment at alanine 1026–cysteine 1076 adopts a Phorbol-ester/DAG-type zinc-finger fold. In terms of domain architecture, PH spans glycine 1096 to alanine 1215. The CNH domain maps to isoleucine 1241 to asparagine 1515. Residues isoleucine 1585–glycine 1598 enclose the CRIB domain. The segment at threonine 1616–alanine 1713 is disordered. Residues aspartate 1666–lysine 1677 show a composition bias toward basic and acidic residues. Phosphoserine is present on residues serine 1682, serine 1684, serine 1688, serine 1692, and serine 1695.

The protein belongs to the protein kinase superfamily. AGC Ser/Thr protein kinase family. DMPK subfamily. Homodimer and homotetramer via the coiled coil regions. Interacts tightly with GTP-bound but not GDP-bound CDC42. Interacts with TJP1; this interaction requires the presence of catalytically active CDC42. Forms a tripartite complex with MYO18A and LURAP1 with the latter acting as an adapter connecting CDC42BPB and MYO18A. LURAP1 binding results in activation of CDC42BPB by abolition of its negative autoregulation. Interacts with STRIP1, STRN3 and SIKE1. Interacts with CPNE4 (via VWFA domain). Interacts with LURAP1. Interacts (via AGC-kinase C-terminal domain) with FAM89B/LRAP25 (via LRR repeat). Forms a tripartite complex with FAM89B/LRAP25 and LIMK1. Mg(2+) serves as cofactor. In terms of processing, proteolytically cleaved by caspases upon apoptosis induction.

Its subcellular location is the cytoplasm. The protein localises to the cell membrane. It is found in the cell junction. It localises to the cell projection. The protein resides in the lamellipodium. It carries out the reaction L-seryl-[protein] + ATP = O-phospho-L-seryl-[protein] + ADP + H(+). The enzyme catalyses L-threonyl-[protein] + ATP = O-phospho-L-threonyl-[protein] + ADP + H(+). Its activity is regulated as follows. Maintained in an inactive, closed conformation by an interaction between the kinase domain and the negative autoregulatory C-terminal coiled-coil region. Agonist binding to the phorbol ester binding site disrupts this, releasing the kinase domain to allow N-terminus-mediated dimerization and kinase activation by transautophosphorylation. Inhibited by chelerythrine chloride. In terms of biological role, serine/threonine-protein kinase which is an important downstream effector of CDC42 and plays a role in the regulation of cytoskeleton reorganization and cell migration. Regulates actin cytoskeletal reorganization via phosphorylation of PPP1R12C and MYL9/MLC2. In concert with MYO18A and LURAP1, is involved in modulating lamellar actomyosin retrograde flow that is crucial to cell protrusion and migration. Phosphorylates PPP1R12A. In concert with FAM89B/LRAP25 mediates the targeting of LIMK1 to the lamellipodium resulting in its activation and subsequent phosphorylation of CFL1 which is important for lamellipodial F-actin regulation. This Mus musculus (Mouse) protein is Serine/threonine-protein kinase MRCK beta.